A 182-amino-acid polypeptide reads, in one-letter code: Crossover junction endodeoxyribonuclease RuvC (182 aa).

Residues Asp-7, Glu-69, and Asp-141 contribute to the active site. Residues Asp-7, Glu-69, and Asp-141 each contribute to the Mg(2+) site.

This sequence belongs to the RuvC family. As to quaternary structure, homodimer which binds Holliday junction (HJ) DNA. The HJ becomes 2-fold symmetrical on binding to RuvC with unstacked arms; it has a different conformation from HJ DNA in complex with RuvA. In the full resolvosome a probable DNA-RuvA(4)-RuvB(12)-RuvC(2) complex forms which resolves the HJ. Mg(2+) is required as a cofactor.

It localises to the cytoplasm. The enzyme catalyses Endonucleolytic cleavage at a junction such as a reciprocal single-stranded crossover between two homologous DNA duplexes (Holliday junction).. The RuvA-RuvB-RuvC complex processes Holliday junction (HJ) DNA during genetic recombination and DNA repair. Endonuclease that resolves HJ intermediates. Cleaves cruciform DNA by making single-stranded nicks across the HJ at symmetrical positions within the homologous arms, yielding a 5'-phosphate and a 3'-hydroxyl group; requires a central core of homology in the junction. The consensus cleavage sequence is 5'-(A/T)TT(C/G)-3'. Cleavage occurs on the 3'-side of the TT dinucleotide at the point of strand exchange. HJ branch migration catalyzed by RuvA-RuvB allows RuvC to scan DNA until it finds its consensus sequence, where it cleaves and resolves the cruciform DNA. The polypeptide is Crossover junction endodeoxyribonuclease RuvC (Variovorax paradoxus (strain S110)).